We begin with the raw amino-acid sequence, 673 residues long: Hemocyanin subunit C (673 aa).

Positions 1–20 are cleaved as a signal peptide; the sequence is MGAWKVWTFFAIALVVAVKA. Cu cation is bound by residues His-207, His-211, and His-237. N-linked (GlcNAc...) asparagine glycosylation occurs at Asn-323. Positions 358, 362, and 398 each coordinate Cu cation. Residues Cys-568 and Cys-616 are joined by a disulfide bond.

The protein belongs to the tyrosinase family. Hemocyanin subfamily. 36-chain polymer consisting of 6 hexamers, each of which includes 4 different chains, A, B, C and D. In terms of tissue distribution, hemolymph.

Its subcellular location is the secreted. The protein localises to the extracellular space. Functionally, hemocyanins are copper-containing oxygen carriers occurring freely dissolved in the hemolymph of many mollusks and arthropods. This is Hemocyanin subunit C (HCC) from Scutigera coleoptrata (House centipede).